Reading from the N-terminus, the 159-residue chain is Globin D, coelomic (159 aa).

Glycine 2 carries the N-acetylglycine modification. Residues 12–158 (DLTPAEKDLI…VQGVLITKHA (147 aa)) enclose the Globin domain. Heme b is bound by residues histidine 74 and histidine 105.

It belongs to the globin family. Homodimer.

In Molpadia arenicola (Sea cucumber), this protein is Globin D, coelomic.